The primary structure comprises 435 residues: GTPase Der (435 aa).

EngA-type G domains follow at residues 2–167 and 178–351; these read ATVV…RESG and PKIA…ESYC. Residues 8–15, 55–59, 118–121, 184–191, 231–235, and 297–300 each bind GTP; these read GRANVGKS, DTCGV, NKSE, GKPNVGKS, DTAGM, and NKFD. One can recognise a KH-like domain in the interval 352 to 435; the sequence is RKVPQQLLSK…PLVIEFKSRR (84 aa).

This sequence belongs to the TRAFAC class TrmE-Era-EngA-EngB-Septin-like GTPase superfamily. EngA (Der) GTPase family. As to quaternary structure, associates with the 50S ribosomal subunit.

GTPase that plays an essential role in the late steps of ribosome biogenesis. This Pseudothermotoga lettingae (strain ATCC BAA-301 / DSM 14385 / NBRC 107922 / TMO) (Thermotoga lettingae) protein is GTPase Der.